We begin with the raw amino-acid sequence, 1259 residues long: Telomerase reverse transcriptase (1259 aa).

The Reverse transcriptase domain maps to 742–1067 (RGEPRKAVRH…SFMPWSGLLI (326 aa)). The Mg(2+) site is built by Asp-837, Asp-999, and Asp-1000.

This sequence belongs to the reverse transcriptase family. Telomerase subfamily. As to quaternary structure, component of the telomerase ribonucleoprotein complex. As to expression, expressed in shoot apices and immature embryos.

It localises to the nucleus. Its subcellular location is the chromosome. It is found in the telomere. It carries out the reaction DNA(n) + a 2'-deoxyribonucleoside 5'-triphosphate = DNA(n+1) + diphosphate. In terms of biological role, telomerase is a ribonucleoprotein enzyme essential for the replication of chromosome termini in most eukaryotes. It elongates telomeres. It is a reverse transcriptase that adds simple sequence repeats to chromosome ends by copying a template sequence within the RNA component of the enzyme. The sequence is that of Telomerase reverse transcriptase (TERT) from Oryza sativa subsp. japonica (Rice).